A 546-amino-acid chain; its full sequence is Chaperonin GroEL (546 aa).

ATP contacts are provided by residues 29 to 32 (TMGP), Lys50, 86 to 90 (DGTTT), Gly414, and Asp492.

This sequence belongs to the chaperonin (HSP60) family. As to quaternary structure, forms a cylinder of 14 subunits composed of two heptameric rings stacked back-to-back. Interacts with the co-chaperonin GroES.

It is found in the cytoplasm. It carries out the reaction ATP + H2O + a folded polypeptide = ADP + phosphate + an unfolded polypeptide.. Functionally, together with its co-chaperonin GroES, plays an essential role in assisting protein folding. The GroEL-GroES system forms a nano-cage that allows encapsulation of the non-native substrate proteins and provides a physical environment optimized to promote and accelerate protein folding. This Helicobacter pylori (strain G27) protein is Chaperonin GroEL.